Here is a 193-residue protein sequence, read N- to C-terminus: MSNILIINGAKKFAHSNGQLNDTLTEVADGTLRDLGHDVRIVRADSDYDVKAEVQNFLWADVVIWQMPGWWMGAPWTVKKYIDDVFTEGHGTLYASDGRTRKDPSKKYGSGGLVQGKKYMLSLTWNAPMEAFTEKDQFFHGVGVDGVYLPFHKANQFLGMEPLPTFIANDVIKMPDVPRYTEEYRKHLVEIFG.

FAD is bound by residues 16 to 23 (SNGQLNDT), 69 to 72 (GWWM), Tyr108, and 124 to 127 (TWNA).

It belongs to the oxidoreductase MdaB family. As to quaternary structure, homodimer. Requires FAD as cofactor.

It localises to the cytoplasm. It carries out the reaction a quinone + NADPH + H(+) = a quinol + NADP(+). In terms of biological role, NADPH-specific quinone reductase. The protein is NADPH:quinone oxidoreductase MdaB of Escherichia coli O157:H7.